We begin with the raw amino-acid sequence, 331 residues long: Elongation factor Ts, mitochondrial (331 aa).

The transit peptide at 1–14 directs the protein to the mitochondrion; it reads MIVSRQVIRSVVRK.

This sequence belongs to the EF-Ts family.

Its subcellular location is the mitochondrion. Associates with the EF-Tu.GDP complex and induces the exchange of GDP to GTP. It remains bound to the aminoacyl-tRNA.EF-Tu.GTP complex up to the GTP hydrolysis stage on the ribosome. The sequence is that of Elongation factor Ts, mitochondrial from Brugia malayi (Filarial nematode worm).